A 469-amino-acid chain; its full sequence is Glutamate--tRNA ligase (469 aa).

The short motif at 9-19 (PSPTGFLHVGG) is the 'HIGH' region element. Positions 236-240 (KLSKR) match the 'KMSKS' region motif. Position 239 (Lys-239) interacts with ATP.

Belongs to the class-I aminoacyl-tRNA synthetase family. Glutamate--tRNA ligase type 1 subfamily. In terms of assembly, monomer.

It localises to the cytoplasm. The enzyme catalyses tRNA(Glu) + L-glutamate + ATP = L-glutamyl-tRNA(Glu) + AMP + diphosphate. Functionally, catalyzes the attachment of glutamate to tRNA(Glu) in a two-step reaction: glutamate is first activated by ATP to form Glu-AMP and then transferred to the acceptor end of tRNA(Glu). This is Glutamate--tRNA ligase from Shewanella frigidimarina (strain NCIMB 400).